We begin with the raw amino-acid sequence, 110 residues long: Insulin (110 aa).

A signal peptide spans 1–24 (MALWMRLLPLLALLALWGPDPVPA). Intrachain disulfides connect cysteine 31–cysteine 96, cysteine 43–cysteine 109, and cysteine 95–cysteine 100. Positions 57–87 (EAEDPQVGQVELGGGPGAGSLQPLALEGSLQ) are cleaved as a propeptide — c peptide.

This sequence belongs to the insulin family. As to quaternary structure, heterodimer of a B chain and an A chain linked by two disulfide bonds.

It localises to the secreted. In terms of biological role, insulin decreases blood glucose concentration. It increases cell permeability to monosaccharides, amino acids and fatty acids. It accelerates glycolysis, the pentose phosphate cycle, and glycogen synthesis in liver. The chain is Insulin (INS) from Chlorocebus aethiops (Green monkey).